Consider the following 154-residue polypeptide: Ribosomal RNA large subunit methyltransferase H (154 aa).

Position 103 (glycine 103) interacts with S-adenosyl-L-methionine.

Belongs to the RNA methyltransferase RlmH family. In terms of assembly, homodimer.

It is found in the cytoplasm. It carries out the reaction pseudouridine(1915) in 23S rRNA + S-adenosyl-L-methionine = N(3)-methylpseudouridine(1915) in 23S rRNA + S-adenosyl-L-homocysteine + H(+). In terms of biological role, specifically methylates the pseudouridine at position 1915 (m3Psi1915) in 23S rRNA. In Gemmatimonas aurantiaca (strain DSM 14586 / JCM 11422 / NBRC 100505 / T-27), this protein is Ribosomal RNA large subunit methyltransferase H.